The sequence spans 20 residues: Elongation factor Tu (20 aa).

This sequence belongs to the GTP-binding elongation factor family. EF-Tu/EF-1A subfamily. Monomer.

The protein localises to the cytoplasm. In terms of biological role, this protein promotes the GTP-dependent binding of aminoacyl-tRNA to the A-site of ribosomes during protein biosynthesis. The protein is Elongation factor Tu (tuf) of Mycoplasmopsis synoviae (Mycoplasma synoviae).